A 904-amino-acid chain; its full sequence is Serine/arginine repetitive matrix protein 1 (904 aa).

Met-1 is modified (N-acetylmethionine). The tract at residues 1–151 (MDAGFFRGTS…ASMKKQDEDK (151 aa)) is necessary for DNA and RNA-binding. The tract at residues 1 to 156 (MDAGFFRGTS…QDEDKDKRDK (156 aa)) is necessary for mRNA 3'-end cleavage and cytoplasmic accumulation. Citrulline is present on Arg-7. One can recognise a PWI domain in the interval 27-126 (QLKFAECLEK…AGIPSAFLEL (100 aa)). Lys-127 is covalently cross-linked (Glycyl lysine isopeptide (Lys-Gly) (interchain with G-Cter in SUMO2)). Basic and acidic residues predominate over residues 139-170 (EKLASMKKQDEDKDKRDKEEKESSREKRERSR). Residues 139–904 (EKLASMKKQD…MRKAQVSPQS (766 aa)) are disordered. Lys-140 carries the N6-acetyllysine modification. Residues 171 to 207 (SPRRRKSRSPSPRRRSSPVRRERKRSHSRSPRHRTKS) show a composition bias toward basic residues. Positions 214-234 (PEKKEKTPELPEPSVKVKEPS) are enriched in basic and acidic residues. Thr-220 carries the post-translational modification Phosphothreonine. Ser-227 carries the post-translational modification Phosphoserine. Residue Lys-231 forms a Glycyl lysine isopeptide (Lys-Gly) (interchain with G-Cter in SUMO1); alternate linkage. Lys-231 participates in a covalent cross-link: Glycyl lysine isopeptide (Lys-Gly) (interchain with G-Cter in SUMO2); alternate. Residues Ser-234 and Ser-240 each carry the phosphoserine modification. Thr-241 is modified (phosphothreonine). Basic and acidic residues predominate over residues 246–275 (KVPKPEPIPEPKEPSPEKNSKKEKEKEKTR). Lys-249 is covalently cross-linked (Glycyl lysine isopeptide (Lys-Gly) (interchain with G-Cter in SUMO2)). Residue Ser-260 is modified to Phosphoserine. Composition is skewed to basic residues over residues 276–329 (PRSR…RTPP) and 336–351 (PRHR…RRRS). The segment at 300–688 (RRHRSRSRSY…NKRHSPSPRP (389 aa)) is necessary for speckles and matrix localization. Residues 352–368 (SASLSGSSSSSSSSRSR) show a composition bias toward low complexity. Residues Ser-389, Ser-391, Ser-393, and Ser-402 each carry the phosphoserine modification. Phosphothreonine is present on Thr-406. Ser-414 carries the post-translational modification Phosphoserine. Thr-416 is subject to Phosphothreonine. Ser-420, Ser-429, Ser-431, and Ser-436 each carry phosphoserine. A compositionally biased stretch (polar residues) spans 428–438 (VSVSPGRTSGK). A Glycyl lysine isopeptide (Lys-Gly) (interchain with G-Cter in SUMO2) cross-link involves residue Lys-447. Ser-450 and Ser-452 each carry phosphoserine. A Glycyl lysine isopeptide (Lys-Gly) (interchain with G-Cter in SUMO2) cross-link involves residue Lys-459. Ser-463 and Ser-465 each carry phosphoserine. Lys-472 is covalently cross-linked (Glycyl lysine isopeptide (Lys-Gly) (interchain with G-Cter in SUMO2)). Ser-478 carries the phosphoserine modification. Low complexity predominate over residues 478 to 501 (SVQQRRQYRRQNQQSSSDSGSSSS). The span at 503-518 (EDERPKRSHVKNGEVG) shows a compositional bias: basic and acidic residues. Phosphoserine is present on residues Ser-524, Ser-526, Ser-528, Ser-530, Ser-532, Ser-549, and Ser-551. Residues 533–560 (PRKRQKETSPRGRRRRSPSPPPTRRRRS) are compositionally biased toward basic residues. Thr-555 is modified (phosphothreonine). Phosphoserine is present on residues Ser-560 and Ser-562. Residues 567–592 (PRRRRTPTPPPRRRTPSPPPRRRSPS) show a composition bias toward basic residues. 3 positions are modified to phosphothreonine: Thr-572, Thr-574, and Thr-581. Ser-583 bears the Phosphoserine mark. Over residues 593–605 (PRRYSPPIQRRYS) the composition is skewed to low complexity. A Phosphotyrosine modification is found at Tyr-596. 3 positions are modified to phosphoserine: Ser-597, Ser-605, and Ser-607. The residue at position 614 (Thr-614) is a Phosphothreonine. Phosphoserine is present on residues Ser-616, Ser-626, Ser-628, Ser-636, and Ser-638. Positions 621–636 (PKRRASPSPPPKRRVS) are enriched in basic residues. The segment covering 649-663 (TKRRSPSLSSKHRKG) has biased composition (basic residues). A phosphoserine mark is found at Ser-694, Ser-695, Ser-696, Ser-705, Ser-707, Ser-713, and Ser-715. Composition is skewed to low complexity over residues 701-719 (RRGA…PSTR) and 736-759 (AASP…SPEP). At Thr-718 the chain carries Phosphothreonine. A phosphoserine mark is found at Ser-738, Ser-740, Ser-748, Ser-752, Ser-754, Ser-756, Ser-769, Ser-773, Ser-775, and Ser-777. Residues 771–786 (VQSQSPSTNWSPAVPV) show a composition bias toward low complexity. Thr-778 carries the phosphothreonine modification. 2 positions are modified to phosphoserine: Ser-781 and Ser-791. Thr-793 carries the post-translational modification Phosphothreonine. Residues Ser-795, Ser-797, and Ser-802 each carry the phosphoserine modification. Basic residues predominate over residues 809-834 (KKKKKKKDKKHKKDKKHKKHKKHKKE). Low complexity predominate over residues 837–866 (VAAAAAAAVTPAAIAAATTTLAQEEPVAAP). Lys-869 is covalently cross-linked (Glycyl lysine isopeptide (Lys-Gly) (interchain with G-Cter in SUMO2)). Thr-872 carries the phosphothreonine modification. Ser-874 carries the phosphoserine modification. A compositionally biased stretch (basic and acidic residues) spans 882-892 (DLEKHLREKAL). Residue Ser-901 is modified to Phosphoserine.

It belongs to the splicing factor SR family. In terms of assembly, identified in the spliceosome C complex. Found in a pre-mRNA splicing complex with SFRS4, SFRS5, SNRP70, SNRPA1, SRRM1 and SRRM2. Found in a pre-mRNA exonic splicing enhancer (ESE) complex with SNRP70, SNRPA1, SRRM1 and TRA2B/SFRS10. Component of the minor spliceosome, which splices U12-type introns. Found in a mRNA splicing-dependent exon junction complex (EJC) with DEK, PRPF8, NCBP1, RBM8A, RNPS1, SRRM1 and ALYREF/THOC4. Interacts with DDX39B, CPSF1, RBM8A, RNPS1, and ALYREF/THOC4. Seems to be a compound of RNA export complexes that are released from speckles in a ATP-dependent manner. Post-translationally, phosphorylated on multiple serine and threonine residues by DYRK3 during the G2-to-M transition, after the nuclear-envelope breakdown. Phosphorylation by DYRK3 promotes disassembly of nuclear speckles. In terms of processing, citrullinated by PADI4.

The protein resides in the nucleus matrix. The protein localises to the nucleus speckle. In terms of biological role, part of pre- and post-splicing multiprotein mRNP complexes. As a component of the minor spliceosome, involved in the splicing of U12-type introns in pre-mRNAs. Involved in numerous pre-mRNA processing events. Promotes constitutive and exonic splicing enhancer (ESE)-dependent splicing activation by bridging together sequence-specific (SR family proteins, SFRS4, SFRS5 and TRA2B/SFRS10) and basal snRNP (SNRP70 and SNRPA1) factors of the spliceosome. Stimulates mRNA 3'-end cleavage independently of the formation of an exon junction complex. Binds both pre-mRNA and spliced mRNA 20-25 nt upstream of exon-exon junctions. Binds RNA and DNA with low sequence specificity and has similar preference for either double- or single-stranded nucleic acid substrates. This Homo sapiens (Human) protein is Serine/arginine repetitive matrix protein 1 (SRRM1).